A 222-amino-acid polypeptide reads, in one-letter code: Salivary anticoagulant protein P23 (222 aa).

A signal peptide spans 1–17 (MLTVSLLTLSLAAYASA). N-linked (GlcNAc...) asparagine glycosylation is found at N56, N73, N109, and N114.

As to expression, salivary gland (at protein level). Adult midgut.

It localises to the secreted. In terms of biological role, inhibits host coagulation by delaying thrombin generation and reducing endogenous thrombin potential (ETP). The polypeptide is Salivary anticoagulant protein P23 (Ixodes scapularis (Black-legged tick)).